Here is an 831-residue protein sequence, read N- to C-terminus: Maltodextrin phosphorylase (831 aa).

Lys592 bears the N6-(pyridoxal phosphate)lysine mark.

The protein belongs to the glycogen phosphorylase family. In terms of assembly, trimer (at 25 degrees Celsius). Requires pyridoxal 5'-phosphate as cofactor.

It carries out the reaction [(1-&gt;4)-alpha-D-glucosyl](n) + phosphate = [(1-&gt;4)-alpha-D-glucosyl](n-1) + alpha-D-glucose 1-phosphate. Functionally, phosphorylase is an important allosteric enzyme in carbohydrate metabolism. Catalyzes the phospholytic cleavage of maltodextrins with a minimal chain length of five glucose residues to yield glucose-1-phosphate. Low activity with tetraose and no activity with triose and maltose. Long maltodextrins (8 to 15 glucose units), amylose and starch are not as good substrates as maltoheptaose. The polypeptide is Maltodextrin phosphorylase (malP) (Thermococcus litoralis (strain ATCC 51850 / DSM 5473 / JCM 8560 / NS-C)).